We begin with the raw amino-acid sequence, 614 residues long: Putative ankyrin repeat protein RBE_0997 (614 aa).

9 ANK repeats span residues 3-32, 36-65, 69-98, 102-131, 135-164, 168-197, 201-231, 239-268, and 272-301; these read KDEE…DPNI, DDKP…NPNA, DGEP…DPNL, RKNT…NLNA, SGYP…NPNL, DGSP…NVEA, DGNT…DKEK, NGET…TVNI, and AGYT…ELKE. Positions 348–580 constitute a Glutamine amidotransferase type-1 domain; it reads NVEDIDYRKI…VQSAETFMNK (233 aa). C444 acts as the Nucleophile in catalysis. Active-site residues include H547 and E549.

The protein is Putative ankyrin repeat protein RBE_0997 of Rickettsia bellii (strain RML369-C).